The primary structure comprises 109 residues: Thioredoxin (109 aa).

The Thioredoxin domain maps to 2-109; sequence ETLLWKDARE…LVEKIKELFK (108 aa). A disulfide bridge links cysteine 27 with cysteine 30.

It belongs to the thioredoxin family.

Participates in various redox reactions through the reversible oxidation of its active center dithiol to a disulfide and catalyzes dithiol-disulfide exchange reactions. The polypeptide is Thioredoxin (trxA) (Mycoplasmopsis pulmonis (strain UAB CTIP) (Mycoplasma pulmonis)).